A 97-amino-acid chain; its full sequence is U6-theraphotoxin-Hhn1a 1 (97 aa).

The signal sequence occupies residues Met-1–Ala-33. Positions Ser-34–Arg-61 are excised as a propeptide. Disulfide bonds link Cys-63/Cys-77, Cys-70/Cys-82, and Cys-76/Cys-89.

This sequence belongs to the neurotoxin 10 (Hwtx-1) family. 12 (Hntx-12) subfamily. Expressed by the venom gland.

It localises to the secreted. Ion channel inhibitor. This is U6-theraphotoxin-Hhn1a 1 from Cyriopagopus hainanus (Chinese bird spider).